Consider the following 230-residue polypeptide: Heptaprenylglyceryl phosphate synthase (230 aa).

Position 12 (Lys12) interacts with sn-glycerol 1-phosphate. 2 residues coordinate Mg(2+): Asp14 and Ser40. Sn-glycerol 1-phosphate is bound by residues 159 to 164 (YLEYSG), Gly189, and 209 to 210 (GN).

The protein belongs to the GGGP/HepGP synthase family. Group I subfamily. Homodimer. Mg(2+) is required as a cofactor.

It catalyses the reaction sn-glycerol 1-phosphate + all-trans-heptaprenyl diphosphate = 3-heptaprenyl-sn-glycero-1-phosphate + diphosphate. The protein operates within membrane lipid metabolism; glycerophospholipid metabolism. Functionally, prenyltransferase that catalyzes in vivo the transfer of the heptaprenyl moiety of heptaprenyl pyrophosphate (HepPP; 35 carbon atoms) to the C3 hydroxyl of sn-glycerol-1-phosphate (G1P), producing heptaprenylglyceryl phosphate (HepGP). This reaction is an ether-bond-formation step in the biosynthesis of archaea-type G1P-based membrane lipids found in Bacillales. The chain is Heptaprenylglyceryl phosphate synthase from Bacillus pumilus (strain SAFR-032).